Here is a 664-residue protein sequence, read N- to C-terminus: Serine/threonine-protein kinase PknD (664 aa).

Topologically, residues 1–381 (MSDAVPQVGS…PAGNKRKVWA (381 aa)) are cytoplasmic. Residues 15 to 276 (YQLLRLLGRG…DLAIAAHDAL (262 aa)) form the Protein kinase domain. Residues 21–29 (LGRGGMGEV) and Lys44 contribute to the ATP site. A Phosphothreonine; by autocatalysis modification is found at Thr135. Catalysis depends on Asp138, which acts as the Proton acceptor. Phosphothreonine; by autocatalysis is present on residues Thr169, Thr171, Thr173, and Thr209. Positions 303–333 (TGLSQSESGIAGAGTGPPTPGAARWSPGDSA) are disordered. Residues 382 to 402 (VVGAAAIVLVAIVAAAGYLVL) traverse the membrane as a helical segment. The Extracellular portion of the chain corresponds to 403–664 (RPSWSPTQAS…GNDRVVKLTS (262 aa)). 6 NHL repeats span residues 414 to 456 (QTVL…LATG), 457 to 497 (STGT…LAAG), 498 to 539 (SNNQ…LAAG), 540 to 581 (SKTQ…LEAE), 582 to 623 (SNNQ…LLAG), and 624 to 664 (STTS…KLTS).

Belongs to the protein kinase superfamily. Ser/Thr protein kinase family. As to quaternary structure, homodimer. The extracellular domain interacts with host laminin. Autophosphorylated. Dephosphorylated by PstP.

It localises to the cell membrane. The catalysed reaction is L-seryl-[protein] + ATP = O-phospho-L-seryl-[protein] + ADP + H(+). The enzyme catalyses L-threonyl-[protein] + ATP = O-phospho-L-threonyl-[protein] + ADP + H(+). Its activity is regulated as follows. Dimerization activates the kinase domain of unphosphorylated PknD via an allosteric mechanism, triggering autophosphorylation and phosphorylation of target proteins. Phosphorylated PknD is fully active even in the absence of dimerization. In terms of biological role, part of a signaling pathway that enables adaptation to osmotic stress through cell wall remodeling and virulence factor production. Key microbial factor required for central nervous system tuberculosis. Required for invasion of host brain endothelia, but not macrophages, lung epithelia or other endothelia. The protein is Serine/threonine-protein kinase PknD (pknD) of Mycobacterium tuberculosis (strain CDC 1551 / Oshkosh).